Consider the following 249-residue polypeptide: MRILIANDDGVTAPGIAALYDALADHADCVVIAPDQDKSGASSSLTLDRPLHPQRLDNGFISLNGTPTDCVHLGLNGLLEELPDMVVSGINLGANLGDDVLYSGTVAAAIEGRFLKGPAFAFSLVSRLTDNLPTAMHFARLLVAAHERLAVPPRTVLNVNVPNLPLERVRGIQLTRLGHRARAAAPVKVVNPRGKEGYWISAAGDAEDGGPGTDFHAVMQGYVSITPLQLDRTFHEAFGGLDEWLGGLK.

The a divalent metal cation site is built by Asp8, Asp9, Ser39, and Asn91.

Belongs to the SurE nucleotidase family. It depends on a divalent metal cation as a cofactor.

The protein localises to the cytoplasm. It carries out the reaction a ribonucleoside 5'-phosphate + H2O = a ribonucleoside + phosphate. Its function is as follows. Nucleotidase that shows phosphatase activity on nucleoside 5'-monophosphates. The polypeptide is 5'-nucleotidase SurE (Pseudomonas paraeruginosa (strain DSM 24068 / PA7) (Pseudomonas aeruginosa (strain PA7))).